Reading from the N-terminus, the 163-residue chain is uncharacterized protein (163 aa).

This is an uncharacterized protein from Orgyia pseudotsugata (Douglas-fir tussock moth).